Here is a 2849-residue protein sequence, read N- to C-terminus: Immunoglobulin-like and fibronectin type III domain-containing protein 1 (2849 aa).

Positions 82-108 (AGSAARPDGSGSESLAASSSWKPRRRL) are disordered. A compositionally biased stretch (low complexity) spans 90-101 (GSGSESLAASSS). One can recognise an Ig-like 1 domain in the interval 187–277 (PDFKQKPVTL…GEATCSVRLT (91 aa)). Residues 347–380 (IVDFRGMLRKLQEMKKEQEDRMAQYVSAIANLRH) are a coiled coil. An Ig-like 2 domain is found at 468-557 (PRVVVPLAET…SSAWLVVEGG (90 aa)). Disordered regions lie at residues 577–600 (LASE…RGSL), 652–760 (VTLP…AGQR), 864–924 (YPGQ…DLRS), 962–981 (VGQR…IGPQ), 1061–1103 (EEEF…EGMA), 1221–1258 (TVGS…SSWG), 1312–1338 (STVG…SEGH), 1350–1384 (RDGS…PDGE), 1498–1523 (ETGR…MGSE), 1654–1675 (EWKD…SEEI), 1724–1780 (QQGV…ATSH), and 1827–2055 (GAAG…SMDH). The segment covering 717 to 742 (HPRDRRLESRGEGQEHSEGHGSELDR) has biased composition (basic and acidic residues). Residues 866 to 880 (GQTSEGNDTQKSSLS) are compositionally biased toward polar residues. The segment covering 1070 to 1084 (RSQGKGSRGGMGLGG) has biased composition (gly residues). Residues 1873 to 1882 (SKPQEPQNEL) show a composition bias toward polar residues. Basic and acidic residues-rich tracts occupy residues 1988 to 2004 (SEDR…DRRQ) and 2012 to 2021 (SRRDTQEGRS). The Ig-like 3 domain maps to 2034 to 2137 (PRSRYQPGTG…GCQHSEASLT (104 aa)). 3 Fibronectin type-III domains span residues 2244 to 2339 (PPQG…VAPE), 2344 to 2443 (PPSA…MRPP), and 2445 to 2540 (PVRD…AMPA). The Ig-like 4 domain occupies 2544 to 2628 (PRFLMDSGTK…LRNLQGKEAT (85 aa)). Residues 2641–2735 (APGSIYLQEN…TSQPWCIPRQ (95 aa)) form the Fibronectin type-III 4 domain. Positions 2749-2845 (PDLSQKPRFL…AVSTATLIVT (97 aa)) constitute an Ig-like 5 domain.

In terms of assembly, interacts with FLNC. Interacts with KY. Isoform 1, isoform 3 and isoform 4 are expressed in skeletal muscle while isoform 2 is detected in both skeletal muscle and heart (at protein level).

It localises to the nucleus. The protein localises to the cytoplasm. Its subcellular location is the myofibril. The protein resides in the sarcomere. It is found in the z line. In Mus musculus (Mouse), this protein is Immunoglobulin-like and fibronectin type III domain-containing protein 1 (Igfn1).